Here is a 352-residue protein sequence, read N- to C-terminus: Dysbindin (352 aa).

Ser-11 is subject to Phosphoserine. Positions 88–176 form a coiled coil; that stretch reads EKKRTSLNEL…EAFKAELDTE (89 aa). Positions 173–325 are dysbindin; the sequence is LDTEHTQKAL…DEEEVQVDTA (153 aa). The short motif at 243–256 is the Nuclear export signal element; it reads LMDISDQEALDVFL. Residues 267–352 are disordered; sequence SPGVEMESNP…SDQCDSTQDI (86 aa). The segment covering 274 to 285 has biased composition (polar residues); that stretch reads SNPNQNEMSLQI. Positions 286-301 are enriched in low complexity; sequence PSPSESASQPPASPSA. Residues Ser-315, Ser-340, and Ser-343 each carry the phosphoserine modification.

It belongs to the dysbindin family. In terms of assembly, interacts with AP3M1 and TRIM32. Interacts (isoform 1 and isoform 2 only) with the DNA-dependent protein kinase complex DNA-PK; the interaction phosphorylates DTNBP1 in vitro. Interacts directly in this complex with XRCC5 and XRCC6. Interacts with XPO1; the interaction exports DTNBP1 out of the nucleus. Component of the biogenesis of lysosome-related organelles complex 1 (BLOC-1) composed of BLOC1S1, BLOC1S2, BLOC1S3, BLOC1S4, BLOC1S5, BLOC1S6, DTNBP1/BLOC1S7 and SNAPIN/BLOC1S8. The BLOC-1 complex associates with the AP-3 protein complex and membrane protein cargos. This BLOC-1 complex also associates with the BLOC-2 complex in endosomes. Binds to DTNA and DTNB but may not be a physiological binding partner. Interacts (via its coiled coil domain) with KXD1. Interacts with AP3B2, BLOC1S5, BLOC1S6, CMYA5, PI4K2, RNF151 and SNAPIN/BLOC1S8. Interacts with XPO1; the interaction exports DTNBP1 out of the nucleus. Ubiquitinated by TRIM32. Ubiquitination leads to DTNBP1 degradation. Detected in brain, in hippocampus and dentate gyrus neurons. Detected at axon bundles and axon terminals, notably in the cerebellum and hippocampus. Detected in neuropil in hippocampus, lateral septum, basal ganglia and substantia nigra. Highly expressed in pyramidal cells of hippocampus CA2 and CA3. Detected at the heart and skeletal muscle sarcolemma (at protein level). Ubiquitously expressed. The highest expression is observed in testis, liver, kidney, brain, heart and lung. Expressed at lower levels in stomach and small intestine.

It is found in the cytoplasm. It localises to the cytoplasmic vesicle membrane. Its subcellular location is the endosome membrane. The protein resides in the melanosome membrane. The protein localises to the postsynaptic density. It is found in the endoplasmic reticulum. It localises to the nucleus. Its subcellular location is the cytoplasmic vesicle. The protein resides in the secretory vesicle. The protein localises to the synaptic vesicle membrane. It is found in the postsynaptic cell membrane. Its function is as follows. Component of the BLOC-1 complex, a complex that is required for normal biogenesis of lysosome-related organelles (LRO), such as platelet dense granules and melanosomes. In concert with the AP-3 complex, the BLOC-1 complex is required to target membrane protein cargos into vesicles assembled at cell bodies for delivery into neurites and nerve terminals. The BLOC-1 complex, in association with SNARE proteins, is also proposed to be involved in neurite extension. Associates with the BLOC-2 complex to facilitate the transport of TYRP1 independent of AP-3 function. Plays a role in synaptic vesicle trafficking and in neurotransmitter release. Plays a role in the regulation of cell surface exposure of DRD2. May play a role in actin cytoskeleton reorganization and neurite outgrowth. May modulate MAPK8 phosphorylation. Appears to promote neuronal transmission and viability through regulating the expression of SNAP25 and SYN1, modulating PI3-kinase-Akt signaling and influencing glutamatergic release. Regulates the expression of SYN1 through binding to its promoter. Modulates prefrontal cortical activity via the dopamine/D2 pathway. In Mus musculus (Mouse), this protein is Dysbindin (Dtnbp1).